A 586-amino-acid polypeptide reads, in one-letter code: Serine/threonine-protein phosphatase 2A 56 kDa regulatory subunit delta isoform (586 aa).

The tract at residues 1-80 (MSPSPSSSGK…QSSSRFNLSK (80 aa)) is disordered. 6 tandem repeats follow at residues 21-22 (QP), 23-24 (QP), 25-26 (QP), 27-28 (QP), 29-30 (QP), and 31-32 (QP). The tract at residues 21–36 (QPQPQPQPQPQPQSQP) is 8 X 2 AA approximate tandem repeats of Q-P. The span at 23–35 (QPQPQPQPQPQSQ) shows a compositional bias: pro residues. A 7; approximate repeat occupies 33-34 (QS). Copy 8 of the repeat occupies 35–36 (QP). Residues 36–45 (PPSSNKRPSN) show a composition bias toward low complexity. T47 is subject to Phosphothreonine. Residues S72, S73, and S74 each carry the phosphoserine modification. Positions 507 to 514 (RAPPPLPP) match the SH3-binding; class I motif. The Nuclear localization signal signature appears at 532 to 549 (KRTVETEAVQMLKDIKKE). Residues S557 and S582 each carry the phosphoserine modification.

This sequence belongs to the phosphatase 2A regulatory subunit B56 family. PP2A consists of a common heterodimeric core enzyme, composed of a 36 kDa catalytic subunit (subunit C) and a 65 kDa constant regulatory subunit (PR65 or subunit A), that associates with a variety of regulatory subunits. Proteins that associate with the core dimer include three families of regulatory subunits B (the R2/B/PR55/B55, R3/B''/PR72/PR130/PR59 and R5/B'/B56 families), the 48 kDa variable regulatory subunit, viral proteins, and cell signaling molecules. Interacts with the PP2A A subunit PPP2R1A. Interacts with SGO1. Interacts with ADCY8. As to expression, highly expressed in brain.

The protein localises to the nucleus. Its function is as follows. The B regulatory subunit might modulate substrate selectivity and catalytic activity, and might also direct the localization of the catalytic enzyme to a particular subcellular compartment. The sequence is that of Serine/threonine-protein phosphatase 2A 56 kDa regulatory subunit delta isoform (PPP2R5D) from Oryctolagus cuniculus (Rabbit).